Consider the following 599-residue polypeptide: Sulfite reductase [NADPH] flavoprotein alpha-component (599 aa).

One can recognise a Flavodoxin-like domain in the interval 64-202; sequence ITLISASQTG…VAAQWRARIV (139 aa). Residues 70–75, 117–120, and 153–162 each bind FMN; these read SQTGNA, STQG, and LGDTSYEFFC. The 215-residue stretch at 234 to 448 folds into the FAD-binding FR-type domain; the sequence is EAPLRASLSV…IEHNDNFRLP (215 aa). FAD contacts are provided by residues Thr-322, Ala-356, 386–389, 404–406, Tyr-410, and 419–422; these read RLYS, TVG, and GGAS. Residues 519 to 520, 525 to 529, and Asp-561 contribute to the NADP(+) site; these read SR and KIYVQ. Position 599 (Tyr-599) interacts with FAD.

The protein belongs to the NADPH-dependent sulphite reductase flavoprotein subunit CysJ family. It in the N-terminal section; belongs to the flavodoxin family. In the C-terminal section; belongs to the flavoprotein pyridine nucleotide cytochrome reductase family. In terms of assembly, alpha(8)-beta(8). The alpha component is a flavoprotein, the beta component is a hemoprotein. The cofactor is FAD. It depends on FMN as a cofactor.

It carries out the reaction hydrogen sulfide + 3 NADP(+) + 3 H2O = sulfite + 3 NADPH + 4 H(+). It participates in sulfur metabolism; hydrogen sulfide biosynthesis; hydrogen sulfide from sulfite (NADPH route): step 1/1. Its function is as follows. Component of the sulfite reductase complex that catalyzes the 6-electron reduction of sulfite to sulfide. This is one of several activities required for the biosynthesis of L-cysteine from sulfate. The flavoprotein component catalyzes the electron flow from NADPH -&gt; FAD -&gt; FMN to the hemoprotein component. This is Sulfite reductase [NADPH] flavoprotein alpha-component from Salmonella arizonae (strain ATCC BAA-731 / CDC346-86 / RSK2980).